Here is a 280-residue protein sequence, read N- to C-terminus: MSSSLQELCRKKLPDCILPEFFDDYVLQLLGLHWQDHGSLQRIEKNQILVQQEPIHINEALKVAASEGNYEIVELLLSWEADPRYAVVGALESKYYDLVYKYYDLVKDCHDILPLIQNPETFEKCHELNNPCSLKCLFKHAVIHDMLPILQKYTYFLDGWEYCNQMLFELACSKKKYEMVVWIEGVLGIGKVTSLFTIAISNRDLHLYSLGHLIILERMQSCGQDPTFLLNHFLRDVSIKGLLPFVLKTIEYGGSKEIAITLAKKYQHKHILKYFETGKC.

Belongs to the asfivirus MGF 505 family.

In terms of biological role, plays a role in virus cell tropism, and may be required for efficient virus replication in macrophages. The polypeptide is Protein MGF 505-3R (African swine fever virus (strain Badajoz 1971 Vero-adapted) (Ba71V)).